Reading from the N-terminus, the 98-residue chain is (4S)-4-hydroxy-5-phosphonooxypentane-2,3-dione isomerase (98 aa).

The ABM domain occupies 2–91 (NVTLVEINIK…MSQPRQKRSF (90 aa)).

This sequence belongs to the LsrG family. In terms of assembly, homodimer.

It is found in the cytoplasm. It catalyses the reaction (2S)-2-hydroxy-3,4-dioxopentyl phosphate = 3-hydroxy-2,4-dioxopentyl phosphate. Functionally, involved in the degradation of phospho-AI-2, thereby terminating induction of the lsr operon and closing the AI-2 signaling cycle. Catalyzes the conversion of (4S)-4-hydroxy-5-phosphonooxypentane-2,3-dione (P-DPD) to 3-hydroxy-5-phosphonooxypentane-2,4-dione (P-HPD). The chain is (4S)-4-hydroxy-5-phosphonooxypentane-2,3-dione isomerase from Klebsiella pneumoniae subsp. pneumoniae (strain ATCC 700721 / MGH 78578).